Consider the following 235-residue polypeptide: Large ribosomal subunit protein bL25 (235 aa).

2 disordered regions span residues 1 to 21 (MADN…PARR) and 210 to 235 (APAA…GAKK). A compositionally biased stretch (low complexity) spans 210–222 (APAAGAAPAAGGE). A compositionally biased stretch (basic and acidic residues) spans 223–235 (AAKKAPEAKGAKK).

Belongs to the bacterial ribosomal protein bL25 family. CTC subfamily. In terms of assembly, part of the 50S ribosomal subunit; part of the 5S rRNA/L5/L18/L25 subcomplex. Contacts the 5S rRNA. Binds to the 5S rRNA independently of L5 and L18.

Its function is as follows. This is one of the proteins that binds to the 5S RNA in the ribosome where it forms part of the central protuberance. This is Large ribosomal subunit protein bL25 from Anaeromyxobacter sp. (strain Fw109-5).